Consider the following 1360-residue polypeptide: Probable inactive protein kinase DDB_G0270444 (1360 aa).

4 WD repeats span residues 44 to 83 (SSKR…IKQL), 109 to 152 (IRNI…AVYN), 166 to 205 (TTSA…IMGT), and 208 to 247 (GHSR…QITG). The 319-residue stretch at 636-954 (EKSIQTYLSN…IEQALSHPFI (319 aa)) folds into the Protein kinase domain. Residues 959-979 (KQQQQQQQQKQQQQQQQQQQQ) show a composition bias toward low complexity. 3 disordered regions span residues 959 to 989 (KQQQ…DSLT), 1258 to 1311 (IISE…VEEE), and 1331 to 1360 (EVEE…SNDF). Coiled-coil stretches lie at residues 1014–1269 (SKIK…QEGE) and 1297–1352 (NASD…QVED). The segment covering 1291 to 1300 (LERDNKNASD) has biased composition (basic and acidic residues). Composition is skewed to acidic residues over residues 1301–1311 (HDDEQQFVEEE) and 1331–1354 (EVEE…EDDT).

This sequence belongs to the protein kinase superfamily. CMGC Ser/Thr protein kinase family.

The sequence is that of Probable inactive protein kinase DDB_G0270444 from Dictyostelium discoideum (Social amoeba).